The sequence spans 92 residues: UPF0298 protein BH2594 (92 aa).

Belongs to the UPF0298 family.

Its subcellular location is the cytoplasm. The polypeptide is UPF0298 protein BH2594 (Halalkalibacterium halodurans (strain ATCC BAA-125 / DSM 18197 / FERM 7344 / JCM 9153 / C-125) (Bacillus halodurans)).